Here is an 852-residue protein sequence, read N- to C-terminus: DNA mismatch repair protein MutS (852 aa).

602–609 (GPNMSGKS) contributes to the ATP binding site.

It belongs to the DNA mismatch repair MutS family.

Functionally, this protein is involved in the repair of mismatches in DNA. It is possible that it carries out the mismatch recognition step. This protein has a weak ATPase activity. The polypeptide is DNA mismatch repair protein MutS (Streptococcus thermophilus (strain ATCC BAA-250 / LMG 18311)).